The sequence spans 649 residues: Protein translocase subunit SecA 2 (649 aa).

Residues Gln105, 123–127 (GEGKT), and Asp535 contribute to the ATP site.

This sequence belongs to the SecA family. Monomer and homodimer. Part of the essential Sec protein translocation apparatus which comprises SecA, SecYEG and auxiliary proteins SecDF-YajC and YidC.

It localises to the cell inner membrane. Its subcellular location is the cytoplasm. It catalyses the reaction ATP + H2O + cellular proteinSide 1 = ADP + phosphate + cellular proteinSide 2.. Its function is as follows. Part of the Sec protein translocase complex. Interacts with the SecYEG preprotein conducting channel. Has a central role in coupling the hydrolysis of ATP to the transfer of proteins into and across the cell membrane, serving both as a receptor for the preprotein-SecB complex and as an ATP-driven molecular motor driving the stepwise translocation of polypeptide chains across the membrane. The protein is Protein translocase subunit SecA 2 of Magnetococcus marinus (strain ATCC BAA-1437 / JCM 17883 / MC-1).